The primary structure comprises 438 residues: Argininosuccinate lyase (438 aa).

It belongs to the lyase 1 family. Argininosuccinate lyase subfamily.

It localises to the cytoplasm. The enzyme catalyses 2-(N(omega)-L-arginino)succinate = fumarate + L-arginine. It functions in the pathway amino-acid biosynthesis; L-arginine biosynthesis; L-arginine from L-ornithine and carbamoyl phosphate: step 3/3. This Clostridioides difficile (strain 630) (Peptoclostridium difficile) protein is Argininosuccinate lyase.